The sequence spans 287 residues: Ribosomal RNA small subunit methyltransferase A (287 aa).

S-adenosyl-L-methionine-binding residues include N28, L30, G55, E77, D103, and N123.

This sequence belongs to the class I-like SAM-binding methyltransferase superfamily. rRNA adenine N(6)-methyltransferase family. RsmA subfamily.

Its subcellular location is the cytoplasm. It carries out the reaction adenosine(1518)/adenosine(1519) in 16S rRNA + 4 S-adenosyl-L-methionine = N(6)-dimethyladenosine(1518)/N(6)-dimethyladenosine(1519) in 16S rRNA + 4 S-adenosyl-L-homocysteine + 4 H(+). Specifically dimethylates two adjacent adenosines (A1518 and A1519) in the loop of a conserved hairpin near the 3'-end of 16S rRNA in the 30S particle. May play a critical role in biogenesis of 30S subunits. The polypeptide is Ribosomal RNA small subunit methyltransferase A (Rhodopseudomonas palustris (strain HaA2)).